Consider the following 497-residue polypeptide: Lysophospholipid acyltransferase 5 (497 aa).

6 consecutive transmembrane segments (helical) span residues 31 to 51 (LLTILAGYPVAALYQKFISVI), 74 to 94 (GLDTYHSLIAILTTYFLVLLL), 100 to 120 (IFLAINFVFHMSYLLLGYFYT), 173 to 193 (LELLAFSYFPSGFLVGPQFPF), 213 to 235 (AGVRRFGAGAFYLIVCQVGLRYL), and 264 to 286 (SLYKYISCWLLTEGALICIGLTY). Active-site residues include asparagine 322 and histidine 358. Residues 339-361 (FLNNRTISYGAALGFLAVWHGYH) form a helical membrane-spanning segment. Residue asparagine 398 is glycosylated (N-linked (GlcNAc...) asparagine). The next 2 helical transmembrane spans lie at 408 to 428 (FITLKSYNVVYMGWCLTAFVF) and 435 to 455 (IVVYGAVSYYGFTFLVLWAAF). The tract at residues 469 to 497 (KLAGEDQKLQDSNTDKLVEEKKPEDKKSE) is disordered. Basic and acidic residues predominate over residues 470–497 (LAGEDQKLQDSNTDKLVEEKKPEDKKSE). Phosphoserine is present on serine 480.

Belongs to the membrane-bound acyltransferase family. During gastrulation, expressed mainly along the midline in the presumptive mesoderm. During germ band elongation, expressed in mesoderm and endoderm primordia and in the cephalic furrow. Expression in mesoderm and endoderm lineages continues during germ band shortening. At the end of this process, no longer detected in somatic mesoderm or endoderm layer with expression restricted to anterior and posterior domains of the visceral mesoderm.

Its subcellular location is the endoplasmic reticulum. It localises to the membrane. The catalysed reaction is a 1-acyl-sn-glycero-3-phospho-L-serine + an acyl-CoA = a 1,2-diacyl-sn-glycero-3-phospho-L-serine + CoA. The enzyme catalyses 1-(9Z-octadecenoyl)-sn-glycero-3-phospho-L-serine + (9Z)-hexadecenoyl-CoA = 1-(9Z-octadecenoyl)-2-(9Z-hexadecenoyl)-sn-glycero-3-phospho-L-serine + CoA. It catalyses the reaction a 1-acyl-sn-glycero-3-phosphocholine + an acyl-CoA = a 1,2-diacyl-sn-glycero-3-phosphocholine + CoA. It carries out the reaction 1-hexadecanoyl-sn-glycero-3-phosphocholine + (9Z)-octadecenoyl-CoA = 1-hexadecanoyl-2-(9Z-octadecenoyl)-sn-glycero-3-phosphocholine + CoA. The catalysed reaction is (9Z,12Z)-octadecadienoyl-CoA + 1-hexadecanoyl-sn-glycero-3-phosphocholine = 1-hexadecanoyl-2-(9Z,12Z-octadecadienoyl)-sn-glycero-3-phosphocholine + CoA. The enzyme catalyses (5Z,8Z,11Z,14Z)-eicosatetraenoyl-CoA + 1-hexadecanoyl-sn-glycero-3-phosphocholine = 1-hexadecanoyl-2-(5Z,8Z,11Z,14Z-eicosatetraenoyl)-sn-glycero-3-phosphocholine + CoA. It catalyses the reaction (9Z)-hexadecenoyl-CoA + 1-hexadecanoyl-sn-glycero-3-phosphocholine = 1-hexadecanoyl-2-(9Z-hexadecenoyl)-sn-glycero-3-phosphocholine + CoA. It participates in lipid metabolism; phospholipid metabolism. In terms of biological role, acyltransferase that mediates the acylation of lysophospholipids to produce phospholipids (glycerophospholipids). Highest activity with lysophosphatidylcholine (1-acyl-sn-glycero-3-phosphocholine or LPC) producing phosphatidylcholine (1,2-diacyl-sn-glycero-3-phosphocholine or PC) (LPCAT activity), but also converts lysophosphatidylserine (1-acyl-2-hydroxy-sn-glycero-3-phospho-L-serine or LPS) to phosphatidylserine (1,2-diacyl-sn-glycero-3-phospho-L-serine or PS) (LPSAT activity). Has a preference for unsaturated fatty acids of at least 16 carbons such as oleoyl-CoA ((9Z)-octadecenoyl-CoA) and palmitoleoyl-CoA ((9Z)-hexadecenoyl-CoA). Glycerophospholipids are important structural and functional components of cellular membrane, acyl-chain remodeling regulates the molecular species distribution of glycerophospholipids which can affect membrane fluidity and curvature. Essential for fertility and viability together with Oysgedart (Oys). Required for germ cells to migrate into the mesoderm. This is Lysophospholipid acyltransferase 5 from Drosophila melanogaster (Fruit fly).